A 172-amino-acid polypeptide reads, in one-letter code: NADH-ubiquinone oxidoreductase chain 6 (172 aa).

4 helical membrane-spanning segments follow: residues 1–21 (MNNY…GLAL), 38–58 (VGCL…VFLI), 86–106 (WLIL…ICVL), and 147–167 (CATW…FIII).

This sequence belongs to the complex I subunit 6 family. In terms of assembly, core subunit of respiratory chain NADH dehydrogenase (Complex I) which is composed of 45 different subunits.

Its subcellular location is the mitochondrion inner membrane. It catalyses the reaction a ubiquinone + NADH + 5 H(+)(in) = a ubiquinol + NAD(+) + 4 H(+)(out). Its function is as follows. Core subunit of the mitochondrial membrane respiratory chain NADH dehydrogenase (Complex I) which catalyzes electron transfer from NADH through the respiratory chain, using ubiquinone as an electron acceptor. Essential for the catalytic activity and assembly of complex I. The polypeptide is NADH-ubiquinone oxidoreductase chain 6 (Mtnd6) (Mus musculus (Mouse)).